Consider the following 189-residue polypeptide: Peptidyl-tRNA hydrolase (189 aa).

A tRNA-binding site is contributed by Tyr14. The active-site Proton acceptor is His19. Residues Phe64, Asn66, and Asn112 each contribute to the tRNA site.

This sequence belongs to the PTH family. Monomer.

The protein localises to the cytoplasm. The catalysed reaction is an N-acyl-L-alpha-aminoacyl-tRNA + H2O = an N-acyl-L-amino acid + a tRNA + H(+). Hydrolyzes ribosome-free peptidyl-tRNAs (with 1 or more amino acids incorporated), which drop off the ribosome during protein synthesis, or as a result of ribosome stalling. Its function is as follows. Catalyzes the release of premature peptidyl moieties from peptidyl-tRNA molecules trapped in stalled 50S ribosomal subunits, and thus maintains levels of free tRNAs and 50S ribosomes. In Sphingopyxis alaskensis (strain DSM 13593 / LMG 18877 / RB2256) (Sphingomonas alaskensis), this protein is Peptidyl-tRNA hydrolase.